The chain runs to 99 residues: DNA-binding protein Fis (99 aa).

Residues 1–25 are disordered; it reads MFEQKISSEALTTTTSIPATGQITQ. A DNA-binding region (H-T-H motif) is located at residues 75–94; sequence QTRAATMLGINRGTLRKKLK.

The protein belongs to the transcriptional regulatory Fis family. Homodimer.

In terms of biological role, activates ribosomal RNA transcription. Plays a direct role in upstream activation of rRNA promoters. This Psychromonas ingrahamii (strain DSM 17664 / CCUG 51855 / 37) protein is DNA-binding protein Fis.